The sequence spans 564 residues: NADPH oxidase 1 (564 aa).

Over 1–9 (MGNWVVNHW) the chain is Cytoplasmic. A helical transmembrane segment spans residues 10–30 (FSVLFLVVWLGLNVFLFVDAF). The Extracellular portion of the chain corresponds to 31 to 44 (LKYEKADKYYYTRK). The chain crosses the membrane as a helical span at residues 45–72 (ILGSTLACARASALCLNFNSTLILLPVC). The Ferric oxidoreductase domain occupies 54-283 (RASALCLNFN…LAPVILYICE (230 aa)). The Cytoplasmic segment spans residues 73 to 102 (RNLLSFLRGTCSFCSRTLRKQLDHNLTFHK). Residues H101 and H115 each coordinate heme. Residues 103–123 (LVAYMICLHTAIHIIAHLFNF) form a helical membrane-spanning segment. At 124-168 (DCYSRSRQATDGSLASILSSLSHDEKKGGSWLNPIQSRNTTVEYV) the chain is on the extracellular side. N162 carries an N-linked (GlcNAc...) asparagine glycan. The chain crosses the membrane as a helical span at residues 169–189 (TFTSIAGLTGVIMTIALILMV). The Cytoplasmic portion of the chain corresponds to 190-206 (TSATEFIRRSYFEVFWY). The chain crosses the membrane as a helical span at residues 207-227 (THHLFIFYILGLGIHGIGGIV). H209 and H221 together coordinate heme. Over 228 to 396 (RGQTEESMNE…TASEDVFQYE (169 aa)) the chain is Extracellular. An N-linked (GlcNAc...) asparagine glycan is attached at N236. The FAD-binding FR-type domain maps to 284–391 (RILRFYRSQQ…DGPFGTASED (108 aa)). 338–344 (HPFTLTS) contacts FAD. Residues 397 to 417 (VAVLVGAGIGVTPFASILKSI) traverse the membrane as a helical segment. Positions 397 to 536 (VAVLVGAGIG…GVFLCGPRTL (140 aa)) are interaction with NOXO1. At 418-564 (WYKFQCADHN…VQFYFNKENF (147 aa)) the chain is on the cytoplasmic side. T430 carries the phosphothreonine modification.

In terms of assembly, NOX1, NOXA1, NOXO1, RAC1 and CYBA forms a functional multimeric complex supporting reactive oxygen species (ROS) production. Interacts with NOXO1. Interacts (via FAD-binding FR-type domain) with ARHGEF7 (via PH domain). The phosphorylated form at Thr-430 interacts with NOXA1 with greater affinity. FAD serves as cofactor. In terms of processing, phosphorylation at Thr-430 mediated by PKC/PRKBC positively regulates its interaction with NOXA1 and enzyme activity. As to expression, detected in colon, uterus, prostate, and colon carcinoma, but not in peripheral blood leukocytes.

The protein localises to the cell projection. Its subcellular location is the invadopodium membrane. It localises to the cell membrane. It catalyses the reaction NADPH + 2 O2 = 2 superoxide + NADP(+) + H(+). With respect to regulation, the oxidase activity is potentiated by NOXA1, NOXO1 and RAC1. Functionally, NADPH oxidase that catalyzes the generation of superoxide from molecular oxygen utilizing NADPH as an electron donor. This is NADPH oxidase 1 from Homo sapiens (Human).